The sequence spans 293 residues: Acetylglutamate kinase (293 aa).

Substrate-binding positions include 60–61, arginine 82, and asparagine 188; that span reads GG.

It belongs to the acetylglutamate kinase family. ArgB subfamily.

Its subcellular location is the cytoplasm. It catalyses the reaction N-acetyl-L-glutamate + ATP = N-acetyl-L-glutamyl 5-phosphate + ADP. It participates in amino-acid biosynthesis; L-arginine biosynthesis; N(2)-acetyl-L-ornithine from L-glutamate: step 2/4. Functionally, catalyzes the ATP-dependent phosphorylation of N-acetyl-L-glutamate. This Methanothermobacter thermautotrophicus (strain ATCC 29096 / DSM 1053 / JCM 10044 / NBRC 100330 / Delta H) (Methanobacterium thermoautotrophicum) protein is Acetylglutamate kinase.